The sequence spans 2472 residues: Telomere-associated protein RIF1 (2472 aa).

The tract at residues 1-25 is disordered; the sequence is MTARGQSPLAPLLETLEDPSASHGG. Ser402 is subject to Phosphoserine. A Phosphothreonine modification is found at Thr409. Phosphoserine is present on residues Ser782, Ser979, and Ser1008. Thr1047 carries the phosphothreonine modification. A disordered region spans residues 1145–1192; that stretch reads LEKSSLSNNECGSLDKTSPEMSNSNNDERKKALISSRKTSTECASSTE. The span at 1148 to 1169 shows a compositional bias: polar residues; it reads SSLSNNECGSLDKTSPEMSNSN. Ser1162 bears the Phosphoserine mark. Position 1220 is a phosphothreonine (Thr1220). Phosphoserine occurs at positions 1236 and 1238. 2 stretches are compositionally biased toward basic and acidic residues: residues 1265-1279 and 1306-1315; these read AKQR…DSEK and MRSEPEKNTE. Disordered regions lie at residues 1265–1318, 1398–1464, and 1479–1587; these read AKQR…EESV, MVNE…DVLP, and IEKG…DQEE. Residues 1400-1412 show a composition bias toward polar residues; sequence NEDSQVQITPNQK. Ser1422, Ser1454, and Ser1513 each carry phosphoserine. Basic and acidic residues-rich tracts occupy residues 1431–1464 and 1500–1530; these read SQDK…DVLP and EQNK…EKLV. Thr1518 bears the Phosphothreonine mark. Phosphoserine is present on residues Ser1542, Ser1552, Ser1554, Ser1556, and Ser1564. Residues 1565–1574 show a composition bias toward basic residues; sequence RKKRSGKWKN. Phosphoserine is present on residues Ser1576, Ser1579, Ser1613, Ser1616, Ser1688, Ser1693, Ser1706, and Ser1709. Residues 1762-1782 form a disordered region; sequence TKKADVQAPVSPSETSQANPY. Polar residues predominate over residues 1771–1782; the sequence is VSPSETSQANPY. Thr1806 is modified (phosphothreonine). A Phosphoserine modification is found at Ser1810. The span at 1846–1859 shows a compositional bias: polar residues; the sequence is AMSLESQESPNENF. Residues 1846–1889 are disordered; sequence AMSLESQESPNENFKTVGPCLGDSKNVSQESLETKEEKPEETPK. Ser1873 and Ser1876 each carry phosphoserine. Positions 1877–1889 are enriched in basic and acidic residues; that stretch reads LETKEEKPEETPK. Residues 1924–2472 are interaction with condensed chromosomes in telophase; that stretch reads EASFHGQERT…WRSPSHENSI (549 aa). Ser1926 and Ser1971 each carry phosphoserine. The disordered stretch occupies residues 1992 to 2021; sequence EQTAAGELDGGNDVSDLHSSEETNTKMKNN. Basic and acidic residues predominate over residues 2006–2021; the sequence is SDLHSSEETNTKMKNN. Phosphoserine occurs at positions 2144 and 2161. Thr2167 carries the phosphothreonine modification. An interaction with ERCC6 region spans residues 2170–2446; sequence VWSPLASPST…SGSQLFEMHE (277 aa). Phosphoserine occurs at positions 2172, 2176, 2195, 2196, and 2205. Positions 2227-2255 are enriched in polar residues; sequence RSHSSNSSPIGKSVKTSPTTQSKHNTTSA. Positions 2227 to 2269 are disordered; it reads RSHSSNSSPIGKSVKTSPTTQSKHNTTSAKGFLSPGSRSPKFK. A phosphoserine mark is found at Ser2260, Ser2339, Ser2391, Ser2393, Ser2465, and Ser2471.

This sequence belongs to the RIF1 family. In terms of assembly, interacts with TP53BP1 (when phosphorylated by ATM). May interact with TRF2. Interacts with SHLD2. Interacts with ERCC6 (via WHD region). Interacts with ASTE1. Highly expressed in testis.

The protein localises to the nucleus. The protein resides in the chromosome. Its subcellular location is the telomere. It is found in the cytoplasm. It localises to the cytoskeleton. The protein localises to the spindle. In terms of biological role, key regulator of TP53BP1 that plays a key role in the repair of double-strand DNA breaks (DSBs) in response to DNA damage: acts by promoting non-homologous end joining (NHEJ)-mediated repair of DSBs. In response to DNA damage, interacts with ATM-phosphorylated TP53BP1. Interaction with TP53BP1 leads to dissociate the interaction between NUDT16L1/TIRR and TP53BP1, thereby unmasking the tandem Tudor-like domain of TP53BP1 and allowing recruitment to DNA DSBs. Once recruited to DSBs, RIF1 and TP53BP1 act by promoting NHEJ-mediated repair of DSBs. In the same time, RIF1 and TP53BP1 specifically counteract the function of BRCA1 by blocking DSBs resection via homologous recombination (HR) during G1 phase. Also required for immunoglobulin class-switch recombination (CSR) during antibody genesis, a process that involves the generation of DNA DSBs. Promotes NHEJ of dysfunctional telomeres. This is Telomere-associated protein RIF1 from Homo sapiens (Human).